Here is a 646-residue protein sequence, read N- to C-terminus: WW domain-containing adapter protein with coiled-coil (646 aa).

Positions 1–138 (MVMYARKQQR…YDSADDWSEH (138 aa)) are disordered. Positions 23 to 37 (QPFQALKYSSKSHPS) are enriched in polar residues. Residues 38–50 (SGDHRHEKMRDAA) show a composition bias toward basic and acidic residues. Position 53 is a phosphoserine (S53). The segment covering 61 to 75 (RSNSPENKYSDSTGH) has biased composition (polar residues). Residues 103-122 (NHSALHSSNSHSSNPSNNPS) are compositionally biased toward low complexity. Positions 129 to 162 (YDSADDWSEHISSSGKKYYYNCRTEVSQWEKPKE) constitute a WW domain. Phosphoserine occurs at positions 131 and 142. Basic and acidic residues-rich tracts occupy residues 158 to 174 (EKPKEWLEREQRQKEAN) and 182 to 191 (PKDRDYRREV). Disordered regions lie at residues 158–352 (EKPK…PQST) and 428–541 (TQAQ…TATV). Over residues 211–225 (DASSLLPQNILSQTS) the composition is skewed to polar residues. S225 is modified (phosphoserine). Residues 226–239 (RHNDKDYRLPRAET) are compositionally biased toward basic and acidic residues. A compositionally biased stretch (low complexity) spans 252–267 (PVVHPTATPSTVPSSP). The segment covering 284-300 (GASTLSKLPTPTASLPA) has biased composition (polar residues). T293 is modified (phosphothreonine). K302 is subject to N6-acetyllysine. The segment covering 316-331 (SHSCTTPSTSSASGLN) has biased composition (polar residues). Residues 332–351 (PTSAPPTSASAVPVSPVPQS) are compositionally biased toward low complexity. The segment covering 428-463 (TQAQPSNQSPMSLTSDASSPRSYVSPRISTPQTNTV) has biased composition (polar residues). A Phosphoserine modification is found at S446. Phosphothreonine is present on T471. Residues 490 to 503 (VSHSATQQPVTADK) are compositionally biased toward polar residues. 3 positions are modified to phosphoserine: S511, S523, and S525. Low complexity predominate over residues 511 to 524 (SPRSLQRLSSQRSP). A compositionally biased stretch (polar residues) spans 528–541 (PNHTCSSNASTATV). Residues 617–643 (QATLREQRILFLRQQIKELEKLKNQNS) adopt a coiled-coil conformation.

Interacts (via coiled coil domain) with RNF20, RNF40 and UBE2A. Interacts (via WW domain) with RNA polymerase II. Interacts with MTOR and other components of the MTOR pathway including RPTOR, RUVBL1, RUVBL2, TTI1 and TTI2. Phosphorylated on tyrosine residues.

The protein resides in the nucleus speckle. The protein localises to the nucleus. Functionally, acts as a linker between gene transcription and histone H2B monoubiquitination at 'Lys-120' (H2BK120ub1). Interacts with the RNA polymerase II transcriptional machinery via its WW domain and with RNF20-RNF40 via its coiled coil region, thereby linking and regulating H2BK120ub1 and gene transcription. Regulates the cell-cycle checkpoint activation in response to DNA damage. Positive regulator of amino acid starvation-induced autophagy. Also acts as a negative regulator of basal autophagy. Positively regulates MTOR activity by promoting, in an energy-dependent manner, the assembly of the TTT complex composed of TELO2, TTI1 and TTI2 and the RUVBL complex composed of RUVBL1 and RUVBL2 into the TTT-RUVBL complex. This leads to the dimerization of the mTORC1 complex and its subsequent activation. May negatively regulate the ubiquitin proteasome pathway. This Mus musculus (Mouse) protein is WW domain-containing adapter protein with coiled-coil (Wac).